The sequence spans 307 residues: Polysialic acid O-acetyltransferase (307 aa).

The segment covering 1-90 (MLRLKTQDSR…LKTQDSRLKT (90 aa)) has biased composition (basic and acidic residues). Residues 1 to 95 (MLRLKTQDSR…SRLKTQDSFS (95 aa)) are disordered. 13 consecutive repeat copies span residues 3–9 (RLKTQDS), 10–16 (RLKTQDS), 17–23 (RLKTQDS), 24–30 (RLKTQDS), 31–37 (RLKTQDS), 38–44 (RLKTQDS), 45–51 (RLKTQDS), 52–58 (RLKTQDS), 59–65 (RLKTQDS), 66–72 (RLKTQDS), 73–79 (RLKTQDS), 80–86 (RLKTQDS), and 87–93 (RLKTQDS). The tract at residues 3-93 (RLKTQDSRLK…QDSRLKTQDS (91 aa)) is 13 X 7 AA tandem repeat of RLKTQDS encoded by a 7 nucleotide repeat. Acetyl-CoA contacts are provided by residues 208 to 210 (DGH), Arg-237, Lys-243, Lys-261, and Lys-278.

Belongs to the transferase hexapeptide repeat family. As to quaternary structure, homotrimer. Hexamer formed by two homotrimers.

The catalysed reaction is [N-acetyl-alpha-D-neuraminosyl-(2-&gt;8)](n) + n acetyl-CoA = [N,O(9)-diacetyl-alpha-D-neuraminosyl-(2-&gt;8)](n) + n CoA. It carries out the reaction [N-acetyl-alpha-D-neuraminosyl-(2-&gt;8)](n) + n acetyl-CoA = [O(7),N-diacetyl-alpha-D-neuraminosyl-(2-&gt;8)](n) + n CoA. Its function is as follows. Catalyzes the O-acetylation of capsular polymeric sialic acid. Shows high substrate specificity toward polymers of sialic acid that contains a large number of residues. The protein is Polysialic acid O-acetyltransferase of Escherichia coli O1:K1 / APEC.